A 342-amino-acid chain; its full sequence is MMIEKQKALEMAISQIERQFGKGAIMRLGDTAKLNVEVIPTGSLELDIALGVGGVPRGRIIEIFGPESSGKTTLALHMIAEAQKIGGTGAFIDAEHALDPVYAKNLGVNIDDLLVAQPDTGEQALEIAEALVRSGAVDIIVIDSVAALVPKAEIEGEMGDSHVGLQARLMSQALRKLAGVTSKSKSIVVFINQLREKVGVMFGNPETTPGGRALKFYATIRLDVRKVDNIKQGNEIVGSRTRVKVVKNKIAPPFKQAEFDIMYGEGISREGSILDLGTALDIIEKSGSWYSYKDIKLGQGRENAKQFLKENKEIAEEIERKIRENFNLAYNKIKSAPDAIVE.

65-72 (GPESSGKT) lines the ATP pocket.

Belongs to the RecA family.

The protein resides in the cytoplasm. In terms of biological role, can catalyze the hydrolysis of ATP in the presence of single-stranded DNA, the ATP-dependent uptake of single-stranded DNA by duplex DNA, and the ATP-dependent hybridization of homologous single-stranded DNAs. It interacts with LexA causing its activation and leading to its autocatalytic cleavage. This chain is Protein RecA, found in Caldanaerobacter subterraneus subsp. tengcongensis (strain DSM 15242 / JCM 11007 / NBRC 100824 / MB4) (Thermoanaerobacter tengcongensis).